The primary structure comprises 161 residues: 6,7-dimethyl-8-ribityllumazine synthase (161 aa).

5-amino-6-(D-ribitylamino)uracil contacts are provided by residues tryptophan 26, 58–60 (SFE), and 81–83 (VVI). 86–87 (GT) is a (2S)-2-hydroxy-3-oxobutyl phosphate binding site. Histidine 89 functions as the Proton donor in the catalytic mechanism. 5-amino-6-(D-ribitylamino)uracil is bound at residue phenylalanine 114. Arginine 128 provides a ligand contact to (2S)-2-hydroxy-3-oxobutyl phosphate.

It belongs to the DMRL synthase family.

It carries out the reaction (2S)-2-hydroxy-3-oxobutyl phosphate + 5-amino-6-(D-ribitylamino)uracil = 6,7-dimethyl-8-(1-D-ribityl)lumazine + phosphate + 2 H2O + H(+). It participates in cofactor biosynthesis; riboflavin biosynthesis; riboflavin from 2-hydroxy-3-oxobutyl phosphate and 5-amino-6-(D-ribitylamino)uracil: step 1/2. Functionally, catalyzes the formation of 6,7-dimethyl-8-ribityllumazine by condensation of 5-amino-6-(D-ribitylamino)uracil with 3,4-dihydroxy-2-butanone 4-phosphate. This is the penultimate step in the biosynthesis of riboflavin. This chain is 6,7-dimethyl-8-ribityllumazine synthase, found in Streptomyces avermitilis (strain ATCC 31267 / DSM 46492 / JCM 5070 / NBRC 14893 / NCIMB 12804 / NRRL 8165 / MA-4680).